The primary structure comprises 579 residues: Isocitrate dehydrogenase kinase/phosphatase (579 aa).

Residues Ala324–Met330 and Lys345 contribute to the ATP site. Asp380 is an active-site residue.

This sequence belongs to the AceK family.

The protein resides in the cytoplasm. It carries out the reaction L-seryl-[isocitrate dehydrogenase] + ATP = O-phospho-L-seryl-[isocitrate dehydrogenase] + ADP + H(+). Functionally, bifunctional enzyme which can phosphorylate or dephosphorylate isocitrate dehydrogenase (IDH) on a specific serine residue. This is a regulatory mechanism which enables bacteria to bypass the Krebs cycle via the glyoxylate shunt in response to the source of carbon. When bacteria are grown on glucose, IDH is fully active and unphosphorylated, but when grown on acetate or ethanol, the activity of IDH declines drastically concomitant with its phosphorylation. The chain is Isocitrate dehydrogenase kinase/phosphatase from Xanthomonas campestris pv. campestris (strain 8004).